Consider the following 368-residue polypeptide: Phospho-N-acetylmuramoyl-pentapeptide-transferase (368 aa).

9 helical membrane-spanning segments follow: residues 50–70, 95–115, 117–137, 156–176, 183–203, 218–238, 242–262, 284–304, and 347–367; these read LLAL…VVPL, PTMG…ILAG, SPLV…GWLD, LCLQ…QQGW, ITLP…LAVF, LDGL…LWLA, PAIA…LLHN, AIAI…LFVL, and TQVV…CWLL.

The protein belongs to the glycosyltransferase 4 family. MraY subfamily. Requires Mg(2+) as cofactor.

It is found in the cell inner membrane. It catalyses the reaction UDP-N-acetyl-alpha-D-muramoyl-L-alanyl-gamma-D-glutamyl-meso-2,6-diaminopimeloyl-D-alanyl-D-alanine + di-trans,octa-cis-undecaprenyl phosphate = di-trans,octa-cis-undecaprenyl diphospho-N-acetyl-alpha-D-muramoyl-L-alanyl-D-glutamyl-meso-2,6-diaminopimeloyl-D-alanyl-D-alanine + UMP. The protein operates within cell wall biogenesis; peptidoglycan biosynthesis. Its function is as follows. Catalyzes the initial step of the lipid cycle reactions in the biosynthesis of the cell wall peptidoglycan: transfers peptidoglycan precursor phospho-MurNAc-pentapeptide from UDP-MurNAc-pentapeptide onto the lipid carrier undecaprenyl phosphate, yielding undecaprenyl-pyrophosphoryl-MurNAc-pentapeptide, known as lipid I. The protein is Phospho-N-acetylmuramoyl-pentapeptide-transferase of Synechococcus sp. (strain ATCC 27144 / PCC 6301 / SAUG 1402/1) (Anacystis nidulans).